The chain runs to 65 residues: Large ribosomal subunit protein bL35 (65 aa).

Residues 1-16 (MPKQKTHRASAKRFKR) are compositionally biased toward basic residues. Positions 1–21 (MPKQKTHRASAKRFKRTGSGG) are disordered.

Belongs to the bacterial ribosomal protein bL35 family.

In Streptococcus pyogenes serotype M18 (strain MGAS8232), this protein is Large ribosomal subunit protein bL35.